Consider the following 669-residue polypeptide: Putative heme-binding protein rrnAC3100 (669 aa).

Heme is bound at residue histidine 181. Disordered stretches follow at residues 260 to 351 (RVPT…PDVS) and 451 to 477 (LGGS…ESSQ). One can recognise an ABM domain in the interval 579–667 (GTMGMFYTVK…VLADRPRHVF (89 aa)).

It in the N-terminal section; belongs to the ChdC family.

This chain is Putative heme-binding protein rrnAC3100, found in Haloarcula marismortui (strain ATCC 43049 / DSM 3752 / JCM 8966 / VKM B-1809) (Halobacterium marismortui).